The following is a 438-amino-acid chain: Xylose isomerase (438 aa).

Residues H100 and D103 contribute to the active site. The Mg(2+) site is built by E231, E267, H270, D295, D306, D308, and D338.

The protein belongs to the xylose isomerase family. Homotetramer. Requires Mg(2+) as cofactor.

The protein localises to the cytoplasm. It catalyses the reaction alpha-D-xylose = alpha-D-xylulofuranose. The sequence is that of Xylose isomerase from Pseudomonas savastanoi pv. phaseolicola (strain 1448A / Race 6) (Pseudomonas syringae pv. phaseolicola (strain 1448A / Race 6)).